Consider the following 229-residue polypeptide: Putative N-acetylmannosamine-6-phosphate 2-epimerase (229 aa).

The protein belongs to the NanE family.

It catalyses the reaction an N-acyl-D-glucosamine 6-phosphate = an N-acyl-D-mannosamine 6-phosphate. Its pathway is amino-sugar metabolism; N-acetylneuraminate degradation; D-fructose 6-phosphate from N-acetylneuraminate: step 3/5. Converts N-acetylmannosamine-6-phosphate (ManNAc-6-P) to N-acetylglucosamine-6-phosphate (GlcNAc-6-P). The chain is Putative N-acetylmannosamine-6-phosphate 2-epimerase from Shigella dysenteriae serotype 1 (strain Sd197).